The following is a 122-amino-acid chain: MIGMRTILEVADNSGARRLSCILPRGGDLGLRAGLGDVVTAAVKEAAPDSAIKKGKVVRCVIVRMRKETRRKDGTYIRFDSNAAVLINDVGEPVGTRVFGPVARELRDKKFMKIVSLAPEVI.

The protein belongs to the universal ribosomal protein uL14 family. As to quaternary structure, part of the 50S ribosomal subunit. Forms a cluster with proteins L3 and L19. In the 70S ribosome, L14 and L19 interact and together make contacts with the 16S rRNA in bridges B5 and B8.

Functionally, binds to 23S rRNA. Forms part of two intersubunit bridges in the 70S ribosome. This chain is Large ribosomal subunit protein uL14, found in Solibacter usitatus (strain Ellin6076).